A 361-amino-acid polypeptide reads, in one-letter code: Putative F-box protein At3g18340 (361 aa).

Residues 1-46 (MASGKLPWELEEEILCRLPPGSLVRLRSVCKHWNDLYNDKWFIKKS) enclose the F-box domain.

This is Putative F-box protein At3g18340 from Arabidopsis thaliana (Mouse-ear cress).